The sequence spans 435 residues: Diaminobutyrate--2-oxoglutarate transaminase (435 aa).

Lys-266 is subject to N6-(pyridoxal phosphate)lysine.

This sequence belongs to the class-III pyridoxal-phosphate-dependent aminotransferase family. The cofactor is pyridoxal 5'-phosphate.

It carries out the reaction L-2,4-diaminobutanoate + 2-oxoglutarate = L-aspartate 4-semialdehyde + L-glutamate. It functions in the pathway amine and polyamine biosynthesis; ectoine biosynthesis; L-ectoine from L-aspartate 4-semialdehyde: step 1/3. Its function is as follows. Catalyzes reversively the conversion of L-aspartate beta-semialdehyde (ASA) to L-2,4-diaminobutyrate (DABA) by transamination with L-glutamate. This is Diaminobutyrate--2-oxoglutarate transaminase (ectB) from Bordetella bronchiseptica (strain ATCC BAA-588 / NCTC 13252 / RB50) (Alcaligenes bronchisepticus).